Consider the following 461-residue polypeptide: Growth/differentiation factor 7 (461 aa).

An N-terminal signal peptide occupies residues 1–19 (MDLSAAAALCLWLLSACRP). The propeptide occupies 20–315 (RDGLEAAAVL…ANLGGRRRRR (296 aa)). Asn-79 carries N-linked (GlcNAc...) asparagine glycosylation. The disordered stretch occupies residues 287-360 (LRAAAEPPPD…GHGRRGRSRC (74 aa)). Over residues 323 to 350 (GAQGSGGGGGGGGGGGGGGGGGGGGAGR) the composition is skewed to gly residues. Residues 351–360 (GHGRRGRSRC) show a composition bias toward basic residues. 3 cysteine pairs are disulfide-bonded: Cys-360/Cys-426, Cys-389/Cys-458, and Cys-393/Cys-460.

It belongs to the TGF-beta family. In terms of assembly, homodimer; disulfide-linked.

It is found in the secreted. The protein is Growth/differentiation factor 7 (Gdf7) of Mus musculus (Mouse).